The primary structure comprises 636 residues: Receptor-like kinase LIP1 (636 aa).

Residues 18–57 (NAPCTTNETNDDNVEHDEFRPPVVATTKRTEEREPAEQQP) are disordered. Residues 74–352 (FRQECLLGEG…SDVMVALSFL (279 aa)) enclose the Protein kinase domain. ATP contacts are provided by residues 80 to 88 (LGEGGFGRV) and Lys-103. Asp-201 acts as the Proton acceptor in catalysis. Phosphoserine occurs at positions 205 and 236. Thr-242 carries the phosphothreonine modification. Tyr-250 is subject to Phosphotyrosine. The disordered stretch occupies residues 389-636 (FCISRKDVGN…EEEHISSDHD (248 aa)). Residues 403–434 (SSDSEDEEEEKEQKAEKEEESTSKKRQEQEET) adopt a coiled-coil conformation. Residues 413–431 (KEQKAEKEEESTSKKRQEQ) are compositionally biased toward basic and acidic residues. Acidic residues predominate over residues 432-455 (EETATDSDDESDSNSEKDQEEEQS). A compositionally biased stretch (polar residues) spans 480–489 (TNATAQSLKI). 2 stretches are compositionally biased toward basic and acidic residues: residues 522–531 (DSGRDHDDSS) and 554–566 (HETR…DDSP). Over residues 567–576 (RNTSMRINSL) the composition is skewed to polar residues. Basic and acidic residues-rich tracts occupy residues 588–603 (NHQT…KSED) and 619–636 (SLHR…SDHD).

This sequence belongs to the protein kinase superfamily. Ser/Thr protein kinase family. Interacts with PRK6. In terms of processing, palmitoylated. Expressed in mature pollen and in germinating pollen tubes.

The protein resides in the cell membrane. Its subcellular location is the cytoplasm. Involved in pollen tube guidance into micropyle. Participates in perception of the ovule-secreted peptide signal LURE1. In Arabidopsis thaliana (Mouse-ear cress), this protein is Receptor-like kinase LIP1.